The following is a 358-amino-acid chain: Aerobic magnesium-protoporphyrin IX monomethyl ester [oxidative] cyclase (358 aa).

This sequence belongs to the AcsF family. Requires Fe cation as cofactor.

It carries out the reaction Mg-protoporphyrin IX 13-monomethyl ester + 3 NADPH + 3 O2 + 2 H(+) = 3,8-divinyl protochlorophyllide a + 3 NADP(+) + 5 H2O. It functions in the pathway porphyrin-containing compound metabolism; chlorophyll biosynthesis. In terms of biological role, catalyzes the formation of the isocyclic ring in chlorophyll biosynthesis in aerobic conditions. Mediates the cyclase reaction, which results in the formation of divinylprotochlorophyllide (Pchlide) characteristic of all chlorophylls from magnesium-protoporphyrin IX 13-monomethyl ester (MgPMME). The protein is Aerobic magnesium-protoporphyrin IX monomethyl ester [oxidative] cyclase of Rubrivivax gelatinosus (Rhodocyclus gelatinosus).